A 134-amino-acid polypeptide reads, in one-letter code: Small ribosomal subunit protein uS9 (134 aa).

Positions 113–134 (REVERKKYGLKKARRAPQFSKR) are disordered. A compositionally biased stretch (basic residues) spans 120 to 134 (YGLKKARRAPQFSKR).

The protein belongs to the universal ribosomal protein uS9 family.

This is Small ribosomal subunit protein uS9 (rpsI) from Thermotoga maritima (strain ATCC 43589 / DSM 3109 / JCM 10099 / NBRC 100826 / MSB8).